The following is a 396-amino-acid chain: S-adenosylmethionine synthase (396 aa).

H16 is a binding site for ATP. A Mg(2+)-binding site is contributed by D18. E44 serves as a coordination point for K(+). L-methionine contacts are provided by E57 and Q100. The segment at 100 to 110 is flexible loop; it reads QSPDIAQGVDD. ATP is bound by residues 174-176, 241-242, D250, 256-257, A273, and K277; these read DAK, RF, and RK. D250 provides a ligand contact to L-methionine. An L-methionine-binding site is contributed by K281.

It belongs to the AdoMet synthase family. Homotetramer; dimer of dimers. The cofactor is Mg(2+). It depends on K(+) as a cofactor.

The protein resides in the cytoplasm. It carries out the reaction L-methionine + ATP + H2O = S-adenosyl-L-methionine + phosphate + diphosphate. It functions in the pathway amino-acid biosynthesis; S-adenosyl-L-methionine biosynthesis; S-adenosyl-L-methionine from L-methionine: step 1/1. Its function is as follows. Catalyzes the formation of S-adenosylmethionine (AdoMet) from methionine and ATP. The overall synthetic reaction is composed of two sequential steps, AdoMet formation and the subsequent tripolyphosphate hydrolysis which occurs prior to release of AdoMet from the enzyme. This is S-adenosylmethionine synthase from Pediococcus pentosaceus (strain ATCC 25745 / CCUG 21536 / LMG 10740 / 183-1w).